The primary structure comprises 247 residues: Sugar fermentation stimulation protein homolog (247 aa).

The protein belongs to the SfsA family.

This is Sugar fermentation stimulation protein homolog from Aeromonas salmonicida (strain A449).